A 268-amino-acid polypeptide reads, in one-letter code: Undecaprenyl-diphosphatase (268 aa).

Transmembrane regions (helical) follow at residues 47-67, 83-103, 109-129, 144-164, 184-204, 218-238, and 246-266; these read FAILIQLGAILAIVALYFFKL, FIIGVLIAFLPAVIIGLIAGK, LFDPWVVCFSLIVGGAILLWV, YPLLMYLWIGVAQCLAMIPGV, AAEFSFFLAIPTMVGAFVYDF, LVAIGFVVSFITAMIVVKAFL, and FVLFAWWRVIVGTLGLIALAL.

The protein belongs to the UppP family.

The protein resides in the cell inner membrane. The catalysed reaction is di-trans,octa-cis-undecaprenyl diphosphate + H2O = di-trans,octa-cis-undecaprenyl phosphate + phosphate + H(+). Functionally, catalyzes the dephosphorylation of undecaprenyl diphosphate (UPP). Confers resistance to bacitracin. The chain is Undecaprenyl-diphosphatase from Bradyrhizobium sp. (strain BTAi1 / ATCC BAA-1182).